We begin with the raw amino-acid sequence, 481 residues long: Aspartyl/glutamyl-tRNA(Asn/Gln) amidotransferase subunit B (481 aa).

This sequence belongs to the GatB/GatE family. GatB subfamily. Heterotrimer of A, B and C subunits.

The catalysed reaction is L-glutamyl-tRNA(Gln) + L-glutamine + ATP + H2O = L-glutaminyl-tRNA(Gln) + L-glutamate + ADP + phosphate + H(+). It catalyses the reaction L-aspartyl-tRNA(Asn) + L-glutamine + ATP + H2O = L-asparaginyl-tRNA(Asn) + L-glutamate + ADP + phosphate + 2 H(+). Functionally, allows the formation of correctly charged Asn-tRNA(Asn) or Gln-tRNA(Gln) through the transamidation of misacylated Asp-tRNA(Asn) or Glu-tRNA(Gln) in organisms which lack either or both of asparaginyl-tRNA or glutaminyl-tRNA synthetases. The reaction takes place in the presence of glutamine and ATP through an activated phospho-Asp-tRNA(Asn) or phospho-Glu-tRNA(Gln). This Pseudomonas putida (strain W619) protein is Aspartyl/glutamyl-tRNA(Asn/Gln) amidotransferase subunit B.